Here is a 134-residue protein sequence, read N- to C-terminus: Arginine decarboxylase proenzyme (134 aa).

S82 functions as the Schiff-base intermediate with substrate; via pyruvic acid in the catalytic mechanism. S82 is subject to Pyruvic acid (Ser); by autocatalysis. The active-site Proton acceptor; for processing activity is H87. C102 acts as the Proton donor; for catalytic activity in catalysis.

This sequence belongs to the prokaryotic AdoMetDC family. Type 1 subfamily. In terms of assembly, heterooctamer of four alpha and four beta chains arranged as a tetramer of alpha/beta heterodimers. Requires pyruvate as cofactor. Post-translationally, is synthesized initially as an inactive proenzyme. Formation of the active enzyme involves a self-maturation process in which the active site pyruvoyl group is generated from an internal serine residue via an autocatalytic post-translational modification. Two non-identical subunits are generated from the proenzyme in this reaction, and the pyruvate is formed at the N-terminus of the alpha chain, which is derived from the carboxyl end of the proenzyme. The post-translation cleavage follows an unusual pathway, termed non-hydrolytic serinolysis, in which the side chain hydroxyl group of the serine supplies its oxygen atom to form the C-terminus of the beta chain, while the remainder of the serine residue undergoes an oxidative deamination to produce ammonia and the pyruvoyl group blocking the N-terminus of the alpha chain.

It catalyses the reaction L-arginine + H(+) = agmatine + CO2. It participates in amine and polyamine biosynthesis; agmatine biosynthesis; agmatine from L-arginine: step 1/1. Highly competitively inhibited by L-argininamide and L-arginine methyl ester. Also inhibited by alpha-difluoromethylarginine. Is not stimulated by potassium chloride as observed for other decarboxylases. Specifically catalyzes the decarboxylation of L-arginine to agmatine. Is also able to decarboxylate L-canavanine, although less efficiently. Has no S-adenosylmethionine decarboxylase (AdoMetDC) activity. The chain is Arginine decarboxylase proenzyme from Saccharolobus solfataricus (strain ATCC 35092 / DSM 1617 / JCM 11322 / P2) (Sulfolobus solfataricus).